The primary structure comprises 1404 residues: DNA-directed RNA polymerase subunit beta' (1404 aa).

Positions 70, 72, 85, and 88 each coordinate Zn(2+). Asp-460, Asp-462, and Asp-464 together coordinate Mg(2+). Zn(2+)-binding residues include Cys-814, Cys-888, Cys-895, and Cys-898.

It belongs to the RNA polymerase beta' chain family. The RNAP catalytic core consists of 2 alpha, 1 beta, 1 beta' and 1 omega subunit. When a sigma factor is associated with the core the holoenzyme is formed, which can initiate transcription. Mg(2+) is required as a cofactor. It depends on Zn(2+) as a cofactor.

It carries out the reaction RNA(n) + a ribonucleoside 5'-triphosphate = RNA(n+1) + diphosphate. In terms of biological role, DNA-dependent RNA polymerase catalyzes the transcription of DNA into RNA using the four ribonucleoside triphosphates as substrates. This chain is DNA-directed RNA polymerase subunit beta', found in Buchnera aphidicola subsp. Baizongia pistaciae (strain Bp).